Here is a 1304-residue protein sequence, read N- to C-terminus: ATP-dependent RNA helicase HrpA homolog (1304 aa).

The region spanning 93–257 (QKLISEHQVI…FNNAPIIEVS (165 aa)) is the Helicase ATP-binding domain. 106–113 (GETGSGKT) serves as a coordination point for ATP. The DEAH box motif lies at 203–206 (DEAH). The region spanning 281–448 (GILNAVDELQ…SVILQMTALG (168 aa)) is the Helicase C-terminal domain.

The protein belongs to the DEAD box helicase family. DEAH subfamily.

It catalyses the reaction ATP + H2O = ADP + phosphate + H(+). This chain is ATP-dependent RNA helicase HrpA homolog (hrpA), found in Haemophilus influenzae (strain ATCC 51907 / DSM 11121 / KW20 / Rd).